We begin with the raw amino-acid sequence, 422 residues long: Acetyl-CoA acetyltransferase, mitochondrial (422 aa).

A mitochondrion-targeting transit peptide spans 1-28 (MPVLAALLRRGPLLQRRVQEIRYAERSY). Lys-61 is subject to N6-acetyllysine; alternate. At Lys-61 the chain carries N6-succinyllysine; alternate. Residue Lys-73 is modified to N6-succinyllysine. The active-site Acyl-thioester intermediate is the Cys-121. Lys-169, Lys-176, Lys-185, and Lys-197 each carry N6-acetyllysine; alternate. 4 positions are modified to N6-succinyllysine; alternate: Lys-169, Lys-176, Lys-185, and Lys-197. Tyr-214 contacts CoA. Tyr-214 serves as a coordination point for K(+). Lys-218 is modified (N6-acetyllysine; alternate). Lys-218 carries the post-translational modification N6-succinyllysine; alternate. Lys-238 bears the N6-succinyllysine mark. Lys-240 is modified (N6-acetyllysine; alternate). N6-succinyllysine; alternate is present on Lys-240. N6-acetyllysine occurs at positions 246 and 252. CoA-binding positions include 253–255 (RVD) and Lys-258. Lys-258 carries the N6-acetyllysine; alternate modification. Position 258 is an N6-succinyllysine; alternate (Lys-258). N6-succinyllysine is present on residues Lys-261 and Lys-263. 3 residues coordinate K(+): Ala-275, Ala-276, and Ala-278. Ser-279 lines the CoA pocket. Position 333 is an N6-acetyllysine (Lys-333). Residue Val-376 participates in K(+) binding. Residue Cys-408 is the Proton donor/acceptor of the active site.

The protein belongs to the thiolase-like superfamily. Thiolase family. As to quaternary structure, homotetramer. Post-translationally, succinylation at Lys-263, adjacent to a coenzyme A binding site. Desuccinylated by SIRT5.

The protein resides in the mitochondrion. The catalysed reaction is 2 acetyl-CoA = acetoacetyl-CoA + CoA. It catalyses the reaction propanoyl-CoA + acetyl-CoA = 2-methyl-3-oxobutanoyl-CoA + CoA. It participates in lipid metabolism; fatty acid beta-oxidation. Activated by potassium ions, but not sodium ions. Functionally, this is one of the enzymes that catalyzes the last step of the mitochondrial beta-oxidation pathway, an aerobic process breaking down fatty acids into acetyl-CoA. Using free coenzyme A/CoA, catalyzes the thiolytic cleavage of medium- to long-chain 3-oxoacyl-CoAs into acetyl-CoA and a fatty acyl-CoA shortened by two carbon atoms. The activity of the enzyme is reversible and it can also catalyze the condensation of two acetyl-CoA molecules into acetoacetyl-CoA. Thereby, it plays a major role in ketone body metabolism. The polypeptide is Acetyl-CoA acetyltransferase, mitochondrial (ACAT1) (Bos taurus (Bovine)).